A 98-amino-acid polypeptide reads, in one-letter code: MDYVSTKKIKWLDEITGTFTDEEYAKAVEFYKFLVSLSAQNKGILQIEWEKLIDLASSYMKVEPIEAFRIIKKMHAYGWIKMIDKRFIILNLERLRES.

This is an uncharacterized protein from Acidianus two-tailed virus (ATV).